The chain runs to 159 residues: Putative 4-hydroxy-4-methyl-2-oxoglutarate aldolase (159 aa).

Residues 78–81 (GDVI) and R100 contribute to the substrate site. D101 serves as a coordination point for a divalent metal cation.

The protein belongs to the class II aldolase/RraA-like family. As to quaternary structure, homotrimer. Requires a divalent metal cation as cofactor.

It carries out the reaction 4-hydroxy-4-methyl-2-oxoglutarate = 2 pyruvate. The enzyme catalyses oxaloacetate + H(+) = pyruvate + CO2. In terms of biological role, catalyzes the aldol cleavage of 4-hydroxy-4-methyl-2-oxoglutarate (HMG) into 2 molecules of pyruvate. Also contains a secondary oxaloacetate (OAA) decarboxylase activity due to the common pyruvate enolate transition state formed following C-C bond cleavage in the retro-aldol and decarboxylation reactions. The polypeptide is Putative 4-hydroxy-4-methyl-2-oxoglutarate aldolase (Mycobacterium sp. (strain JLS)).